A 645-amino-acid polypeptide reads, in one-letter code: uncharacterized protein (645 aa).

The signal sequence occupies residues methionine 1–serine 23. Disordered stretches follow at residues isoleucine 30–serine 58 and asparagine 92–proline 129. Residues asparagine 92 to threonine 102 show a composition bias toward polar residues. Asparagine 107 carries an N-linked (GlcNAc...) asparagine glycan. A compositionally biased stretch (basic and acidic residues) spans asparagine 107 to aspartate 119. Residues cysteine 135 to aspartate 214 enclose the PAN 1 domain. Disulfide bonds link cysteine 161–cysteine 187 and cysteine 165–cysteine 175. The segment at glutamate 225–proline 247 is disordered. PAN domains are found at residues cysteine 281–cysteine 369 and cysteine 378–cysteine 465. Cystine bridges form between cysteine 281-cysteine 369, cysteine 313-cysteine 341, cysteine 317-cysteine 329, cysteine 378-cysteine 465, cysteine 407-cysteine 436, and cysteine 411-cysteine 422. N-linked (GlcNAc...) asparagine glycosylation occurs at asparagine 421. The segment covering alanine 556–isoleucine 567 has biased composition (basic and acidic residues). The interval alanine 556–lysine 582 is disordered. Asparagine 570 is a glycosylation site (N-linked (GlcNAc...) asparagine).

This is an uncharacterized protein from Caenorhabditis elegans.